A 178-amino-acid chain; its full sequence is Large ribosomal subunit protein uL6 (178 aa).

This sequence belongs to the universal ribosomal protein uL6 family. In terms of assembly, part of the 50S ribosomal subunit.

In terms of biological role, this protein binds to the 23S rRNA, and is important in its secondary structure. It is located near the subunit interface in the base of the L7/L12 stalk, and near the tRNA binding site of the peptidyltransferase center. The protein is Large ribosomal subunit protein uL6 of Geobacillus kaustophilus (strain HTA426).